The primary structure comprises 299 residues: tRNA-cytidine(32) 2-sulfurtransferase (299 aa).

The PP-loop motif motif lies at 56–61; that stretch reads SGGKDS. [4Fe-4S] cluster contacts are provided by C131, C134, and C222.

Belongs to the TtcA family. In terms of assembly, homodimer. The cofactor is Mg(2+). It depends on [4Fe-4S] cluster as a cofactor.

It localises to the cytoplasm. It carries out the reaction cytidine(32) in tRNA + S-sulfanyl-L-cysteinyl-[cysteine desulfurase] + AH2 + ATP = 2-thiocytidine(32) in tRNA + L-cysteinyl-[cysteine desulfurase] + A + AMP + diphosphate + H(+). It functions in the pathway tRNA modification. In terms of biological role, catalyzes the ATP-dependent 2-thiolation of cytidine in position 32 of tRNA, to form 2-thiocytidine (s(2)C32). The sulfur atoms are provided by the cysteine/cysteine desulfurase (IscS) system. The polypeptide is tRNA-cytidine(32) 2-sulfurtransferase (Xylella fastidiosa (strain M12)).